The chain runs to 33 residues: uncharacterized protein (33 aa).

This sequence to E.coli ylcH.

This is an uncharacterized protein from Enterobacteria phage 82 (Bacteriophage 82).